A 719-amino-acid polypeptide reads, in one-letter code: 2'-5'-oligoadenylate synthase 2 (719 aa).

Gly-2 is lipidated: N-myristoyl glycine. OAS domain stretches follow at residues 11-335 (VPAQ…SWNV) and 343-683 (TPGH…WKVP). An N6-acetyllysine modification is found at Lys-378. Ser-396 is a binding site for ATP. Residues Asp-408, Asp-410, and Asp-481 each coordinate Mg(2+). ATP is bound by residues Arg-544 and Lys-547.

It belongs to the 2-5A synthase family. In terms of assembly, homodimer. Mg(2+) serves as cofactor. Post-translationally, myristoylation is not essential for its activity. Glycosylated. Glycosylation is essential for its activity.

It localises to the cytoplasm. It is found in the perinuclear region. The enzyme catalyses 3 ATP = 5'-triphosphoadenylyl-(2'-&gt;5')-adenylyl-(2'-&gt;5')-adenosine + 2 diphosphate. Produced as a latent enzyme which is activated by double stranded RNA (dsRNA) generated during the course of viral infection. The dsRNA activator must be at least 15 nucleotides long, and no modification of the 2'-hydroxyl group is tolerated. ssRNA or dsDNA do not act as activators. Strongly inhibited by copper, iron and zinc ions. Partially inhibited by cobalt and nickel ions. Its function is as follows. Interferon-induced, dsRNA-activated antiviral enzyme which plays a critical role in cellular innate antiviral response. Activated by detection of double stranded RNA (dsRNA): polymerizes higher oligomers of 2'-5'-oligoadenylates (2-5A) from ATP which then bind to the inactive monomeric form of ribonuclease L (RNASEL) leading to its dimerization and subsequent activation. Activation of RNASEL leads to degradation of cellular as well as viral RNA, resulting in the inhibition of protein synthesis, thus terminating viral replication. Can mediate the antiviral effect via the classical RNASEL-dependent pathway or an alternative antiviral pathway independent of RNASEL. In addition, it may also play a role in other cellular processes such as apoptosis, cell growth, differentiation and gene regulation. May act as a negative regulator of lactation, stopping lactation in virally infected mammary gland lobules, thereby preventing transmission of viruses to neonates. Non-infected lobules would not be affected, allowing efficient pup feeding during infection. This chain is 2'-5'-oligoadenylate synthase 2, found in Homo sapiens (Human).